The following is a 912-amino-acid chain: Probable dipeptidyl-aminopeptidase B (912 aa).

Residues M1–L74 form a disordered region. Residues M1 to R85 are Cytoplasmic-facing. Low complexity predominate over residues D16–V27. The span at R30 to L50 shows a compositional bias: basic and acidic residues. Positions D51–E63 are enriched in acidic residues. Residues I86 to I106 traverse the membrane as a helical; Signal-anchor for type II membrane protein segment. Residues A107 to V912 lie on the Vacuolar side of the membrane. Residue N344 is glycosylated (N-linked (GlcNAc...) asparagine). Catalysis depends on S749, which acts as the Charge relay system. A glycan (N-linked (GlcNAc...) asparagine) is linked at N808. Active-site charge relay system residues include D826 and H859. The segment at P892–V912 is disordered.

Belongs to the peptidase S9B family.

It localises to the vacuole membrane. It catalyses the reaction Release of an N-terminal dipeptide, Xaa-Yaa-|-Zaa-, from a polypeptide, preferentially when Yaa is Pro, provided Zaa is neither Pro nor hydroxyproline.. Its function is as follows. Type IV dipeptidyl-peptidase which removes N-terminal dipeptides sequentially from polypeptides having unsubstituted N-termini provided that the penultimate residue is proline. This Fusarium vanettenii (strain ATCC MYA-4622 / CBS 123669 / FGSC 9596 / NRRL 45880 / 77-13-4) (Fusarium solani subsp. pisi) protein is Probable dipeptidyl-aminopeptidase B (DAPB).